The primary structure comprises 393 residues: Xyloside xylosyltransferase 1 (393 aa).

The Cytoplasmic portion of the chain corresponds to 1-23; the sequence is MGLLRGGLPCARAMARLGAVRSH. Residues 24–44 form a helical; Signal-anchor for type II membrane protein membrane-spanning segment; sequence YCALLLAAALAVCAFYYLGSG. Over 45 to 393 the chain is Lumenal; sequence RETFSSATKR…GNCNTPIPED (349 aa). Residue 104–106 coordinates UDP-alpha-D-xylose; sequence MFT. Asp-226 contacts Mn(2+). UDP-alpha-D-xylose is bound at residue Leu-227. A Mn(2+)-binding site is contributed by Asp-228. Residues 263–266 form an interaction with target proteins region; the sequence is HTFW. Residues Ser-290, Leu-328, and Gln-331 each contribute to the UDP-alpha-D-xylose site. 2 residues coordinate a glycoprotein: Gln-331 and Trp-360. 2 disulfide bridges follow: Cys-350–Cys-375 and Cys-357–Cys-386. Position 383 (His-383) interacts with Mn(2+). Asn-385 is an a glycoprotein binding site.

It belongs to the glycosyltransferase 8 family. Homodimer. Dimer formation may be essential for the retention in endoplasmic reticulum. Mg(2+) serves as cofactor. It depends on Mn(2+) as a cofactor.

The protein resides in the endoplasmic reticulum membrane. It carries out the reaction 3-O-[alpha-D-xylosyl-(1-&gt;3)-beta-D-glucosyl]-L-seryl-[EGF-like domain protein] + UDP-alpha-D-xylose = 3-O-[alpha-D-xylosyl-(1-&gt;3)-alpha-D-xylosyl-(1-&gt;3)-beta-D-glucosyl]-L-seryl-[EGF-like domain protein] + UDP + H(+). Its function is as follows. Alpha-1,3-xylosyltransferase, which elongates the O-linked xylose-glucose disaccharide attached to EGF-like repeats in the extracellular domain of target proteins by catalyzing the addition of the second xylose. Known targets include Notch proteins and coagulation factors, such as F9. The protein is Xyloside xylosyltransferase 1 (XXYLT1) of Homo sapiens (Human).